Reading from the N-terminus, the 98-residue chain is C-X-C motif chemokine 10 (98 aa).

Positions 1-21 are cleaved as a signal peptide; it reads MNQTAILICCLIFLTLSGIQG. Arg-26 is subject to Citrulline; by PAD2. 2 cysteine pairs are disulfide-bonded: Cys-30/Cys-57 and Cys-32/Cys-74.

The protein belongs to the intercrine alpha (chemokine CxC) family. In terms of assembly, monomer, dimer, and tetramer. Interacts with CXCR3 (via N-terminus). In terms of processing, several proteases can mediate post-secretion cleavages. DPP4 cleaves CXCL10 on its N-terminal 2 amino acids leading to an antagonist form of CXCL10. This dominant negative form is capable of binding CXCR3 but does not induce signaling. MMP9 cleaves 9 amino acids instead. In terms of tissue distribution, mainly secreted by monocytes, endothelial cells as well as fibroblasts. Expressed by epithelial cells in thymus. Microglial cells produce CXCL10 in response to viral stimulation.

Its subcellular location is the secreted. In terms of biological role, pro-inflammatory cytokine that is involved in a wide variety of processes such as chemotaxis, differentiation, and activation of peripheral immune cells, regulation of cell growth, apoptosis and modulation of angiostatic effects. Plays thereby an important role during viral infections by stimulating the activation and migration of immune cells to the infected sites. Mechanistically, binding of CXCL10 to the CXCR3 receptor activates G protein-mediated signaling and results in downstream activation of phospholipase C-dependent pathway, an increase in intracellular calcium production and actin reorganization. In turn, recruitment of activated Th1 lymphocytes occurs at sites of inflammation. Activation of the CXCL10/CXCR3 axis also plays an important role in neurons in response to brain injury for activating microglia, the resident macrophage population of the central nervous system, and directing them to the lesion site. This recruitment is an essential element for neuronal reorganization. The polypeptide is C-X-C motif chemokine 10 (CXCL10) (Homo sapiens (Human)).